Here is a 611-residue protein sequence, read N- to C-terminus: Pyrichalasin H cluster regulator pyiR (611 aa).

Positions 11–47 form a DNA-binding region, zn(2)-C6 fungal-type; that stretch reads CDRCRGHKLRCIRLDPGPNDTGALLPCKRCVKAGAEC. Disordered stretches follow at residues 53 to 128, 169 to 192, 265 to 291, 401 to 427, 521 to 550, and 564 to 593; these read LSVK…LPPW, ALAA…DGTT, GGAG…GRSS, AHEG…AAPQ, RGGL…SDER, and SWFT…RTVE. Positions 59–69 are enriched in basic and acidic residues; the sequence is GDGHHSAHRAT. Over residues 98-109 the composition is skewed to low complexity; the sequence is PTQPAPQRQTQR. A compositionally biased stretch (polar residues) spans 265 to 279; that stretch reads GGAGSQSLRDQQMQQ. Residues 572–587 show a composition bias toward gly residues; that stretch reads GGSGGSGPGEGTGDSN.

Its subcellular location is the nucleus. Its function is as follows. Transcription factor that specifically regulates the expression of the gene cluster that mediates the biosynthesis of the mycotoxin pyrichalasin H, a tyrosine-derived cytochalasan that inhibits the growth of rice seedlings, but also inhibits lymphocyte capping and actin polymerization and alters cell morphology. Pyrichalasin H is indicated as the responsible agent for the genus-specific pathogenicity of M.grisea toward crabgrass. The protein is Pyrichalasin H cluster regulator pyiR of Pyricularia grisea (Crabgrass-specific blast fungus).